The sequence spans 254 residues: 4-hydroxy-tetrahydrodipicolinate reductase (254 aa).

13–18 contacts NAD(+); that stretch reads GAAGRM. Residue R39 coordinates NADP(+). NAD(+) contacts are provided by residues 86 to 88 and 110 to 113; these read GTT and AANT. H143 functions as the Proton donor/acceptor in the catalytic mechanism. H144 lines the (S)-2,3,4,5-tetrahydrodipicolinate pocket. The active-site Proton donor is K147. (S)-2,3,4,5-tetrahydrodipicolinate is bound at residue 153–154; the sequence is GT.

This sequence belongs to the DapB family.

The protein localises to the cytoplasm. It carries out the reaction (S)-2,3,4,5-tetrahydrodipicolinate + NAD(+) + H2O = (2S,4S)-4-hydroxy-2,3,4,5-tetrahydrodipicolinate + NADH + H(+). It catalyses the reaction (S)-2,3,4,5-tetrahydrodipicolinate + NADP(+) + H2O = (2S,4S)-4-hydroxy-2,3,4,5-tetrahydrodipicolinate + NADPH + H(+). It functions in the pathway amino-acid biosynthesis; L-lysine biosynthesis via DAP pathway; (S)-tetrahydrodipicolinate from L-aspartate: step 4/4. In terms of biological role, catalyzes the conversion of 4-hydroxy-tetrahydrodipicolinate (HTPA) to tetrahydrodipicolinate. The chain is 4-hydroxy-tetrahydrodipicolinate reductase from Zymomonas mobilis subsp. mobilis (strain ATCC 31821 / ZM4 / CP4).